Consider the following 347-residue polypeptide: uncharacterized protein (347 aa).

Over 1–44 (MWNPKKKSEALAKFKSFPYPKPGTSNVLDSKEGDTRRKYFTKTH) the chain is Cytoplasmic. A helical; Signal-anchor for type II membrane protein membrane pass occupies residues 45–62 (LHRLFVFVVLLLCSGYFL). The Lumenal portion of the chain corresponds to 63 to 347 (KHTLLTRPKE…RGWRKLVPFL (285 aa)).

It belongs to the glycosyltransferase 34 family.

The protein resides in the endoplasmic reticulum membrane. This is an uncharacterized protein from Schizosaccharomyces pombe (strain 972 / ATCC 24843) (Fission yeast).